The chain runs to 426 residues: D-tagatose-1,6-bisphosphate aldolase subunit KbaZ (426 aa).

This sequence belongs to the GatZ/KbaZ family. KbaZ subfamily. In terms of assembly, forms a complex with KbaY.

It functions in the pathway carbohydrate metabolism; D-tagatose 6-phosphate degradation; D-glyceraldehyde 3-phosphate and glycerone phosphate from D-tagatose 6-phosphate: step 2/2. Component of the tagatose-1,6-bisphosphate aldolase KbaYZ that is required for full activity and stability of the Y subunit. Could have a chaperone-like function for the proper and stable folding of KbaY. When expressed alone, KbaZ does not show any aldolase activity. The sequence is that of D-tagatose-1,6-bisphosphate aldolase subunit KbaZ from Escherichia coli O6:K15:H31 (strain 536 / UPEC).